The chain runs to 355 residues: Phosphoribosylformylglycinamidine cyclo-ligase (355 aa).

Belongs to the AIR synthase family.

Its subcellular location is the cytoplasm. The enzyme catalyses 2-formamido-N(1)-(5-O-phospho-beta-D-ribosyl)acetamidine + ATP = 5-amino-1-(5-phospho-beta-D-ribosyl)imidazole + ADP + phosphate + H(+). It participates in purine metabolism; IMP biosynthesis via de novo pathway; 5-amino-1-(5-phospho-D-ribosyl)imidazole from N(2)-formyl-N(1)-(5-phospho-D-ribosyl)glycinamide: step 2/2. The chain is Phosphoribosylformylglycinamidine cyclo-ligase from Paraburkholderia phytofirmans (strain DSM 17436 / LMG 22146 / PsJN) (Burkholderia phytofirmans).